Consider the following 730-residue polypeptide: Matrix metalloproteinase-9 (730 aa).

An N-terminal signal peptide occupies residues 1–19 (MSPWQPLLLALLAFGCSSA). The propeptide at 20–107 (APYQRQPTFV…PRCGVPDVGR (88 aa)) is activation peptide. Residue Asn-39 is glycosylated (N-linked (GlcNAc...) asparagine). The Cysteine switch signature appears at 98–105 (PRCGVPDV). Cys-100 contacts Zn(2+). N-linked (GlcNAc...) asparagine glycosylation is found at Asn-120 and Asn-127. Asp-131 and Asp-165 together coordinate Ca(2+). 2 residues coordinate Zn(2+): His-175 and Asp-177. Asp-182, Gly-183, Asp-185, and Leu-187 together coordinate Ca(2+). Residue His-190 coordinates Zn(2+). Residues Gly-197, Gln-199, and Asp-201 each coordinate Ca(2+). Zn(2+) is bound at residue His-203. Positions 205, 206, and 208 each coordinate Ca(2+). 3 consecutive Fibronectin type-II domains span residues 225–273 (SNGA…FCPS), 283–331 (GEGK…FCPT), and 342–390 (SAGE…FCPD). Cystine bridges form between Cys-230–Cys-256, Cys-244–Cys-271, Cys-288–Cys-314, Cys-302–Cys-329, Cys-347–Cys-373, and Cys-361–Cys-388. Residue His-401 coordinates Zn(2+). Glu-402 is an active-site residue. Positions 405 and 411 each coordinate Zn(2+). The tract at residues 442 to 529 (LYGRGSKPDP…SEASTESLSP (88 aa)) is disordered. Pro residues predominate over residues 463 to 477 (PTAPPTMCPTIPPTA). Over residues 478 to 489 (YPTVGPTVGPTG) the composition is skewed to low complexity. A compositionally biased stretch (pro residues) spans 490 to 514 (APSPGPTSSPSPGPTGAPSPGPTAP). An intrachain disulfide couples Cys-534 to Cys-729. 4 Hemopexin repeats span residues 536 to 581 (VDVF…WPAL), 582 to 626 (PATL…GLGP), 628 to 675 (VTHV…FSGV), and 676 to 729 (PWNS…LLQC).

It belongs to the peptidase M10A family. In terms of assembly, exists as monomer or homodimer; disulfide-linked. Also exists as heterodimer with LCN2. Macrophages and transformed cell lines produce only the monomeric form. Interacts with ECM1. Zn(2+) serves as cofactor. Requires Ca(2+) as cofactor. N- and O-glycosylated.

It localises to the secreted. It is found in the extracellular space. The protein localises to the extracellular matrix. It catalyses the reaction Cleavage of gelatin types I and V and collagen types IV and V.. Its activity is regulated as follows. Inhibited by histatin-3 1/24 (histatin-5). Inhibited by ECM1. Matrix metalloproteinase that plays an essential role in local proteolysis of the extracellular matrix and in leukocyte migration. Could play a role in bone osteoclastic resorption. Cleaves KiSS1 at a Gly-|-Leu bond. Cleaves NINJ1 to generate the Secreted ninjurin-1 form. Cleaves type IV and type V collagen into large C-terminal three quarter fragments and shorter N-terminal one quarter fragments. Degrades fibronectin but not laminin or Pz-peptide. This is Matrix metalloproteinase-9 (Mmp9) from Mus musculus (Mouse).